The sequence spans 854 residues: DNA mismatch repair protein MutS (854 aa).

614 to 621 is a binding site for ATP; it reads GPNMGGKS.

This sequence belongs to the DNA mismatch repair MutS family.

Its function is as follows. This protein is involved in the repair of mismatches in DNA. It is possible that it carries out the mismatch recognition step. This protein has a weak ATPase activity. In Yersinia pestis bv. Antiqua (strain Antiqua), this protein is DNA mismatch repair protein MutS.